The sequence spans 181 residues: Oligoribonuclease (181 aa).

The region spanning Leu8–Leu171 is the Exonuclease domain. Tyr129 is a catalytic residue.

It belongs to the oligoribonuclease family.

It is found in the cytoplasm. 3'-to-5' exoribonuclease specific for small oligoribonucleotides. The protein is Oligoribonuclease of Shewanella sp. (strain ANA-3).